Reading from the N-terminus, the 287-residue chain is Alpha-tubulin N-acetyltransferase 2 (287 aa).

Residues 2–193 (VEFAFDIKHL…NNFVLYEGFF (192 aa)) form the N-acetyltransferase domain. Acetyl-CoA-binding positions include 127-140 (FYVHESRQRCGQGK) and 163-172 (SNKMLAFMAK).

The protein belongs to the acetyltransferase ATAT1 family.

The protein resides in the midbody. Its subcellular location is the midbody ring. It carries out the reaction L-lysyl-[alpha-tubulin] + acetyl-CoA = N(6)-acetyl-L-lysyl-[alpha-tubulin] + CoA + H(+). In terms of biological role, specifically acetylates 'Lys-40' in alpha-tubulin on the lumenal side of microtubules. Promotes microtubule destabilization and accelerates microtubule dynamics; this activity may be independent of acetylation activity. Acetylates alpha-tubulin with a slow enzymatic rate, due to a catalytic site that is not optimized for acetyl transfer. Enters the microtubule through each end and diffuses quickly throughout the lumen of microtubules. Acetylates only long/old microtubules because of its slow acetylation rate since it does not have time to act on dynamically unstable microtubules before the enzyme is released. Main acetyltransferase responsible for alpha-tubulin 'Lys-40' acetylation in germline cells during the early stages of oogenesis. Required for normal egg chamber separation. This is Alpha-tubulin N-acetyltransferase 2 from Drosophila melanogaster (Fruit fly).